Reading from the N-terminus, the 139-residue chain is Large ribosomal subunit protein uL13 (139 aa).

Belongs to the universal ribosomal protein uL13 family. In terms of assembly, part of the 50S ribosomal subunit.

Its function is as follows. This protein is one of the early assembly proteins of the 50S ribosomal subunit, although it is not seen to bind rRNA by itself. It is important during the early stages of 50S assembly. The protein is Large ribosomal subunit protein uL13 of Aliarcobacter butzleri (strain RM4018) (Arcobacter butzleri).